The primary structure comprises 145 residues: Male-specific protein scotti (145 aa).

The segment at 1–34 is disordered; it reads MANNRLMPEGQIIEEDMDGEDQNARELDIDDDDD. The segment covering 12–21 has biased composition (acidic residues); the sequence is IIEEDMDGED.

This sequence belongs to the male-specific scotti family.

In terms of biological role, post-meiotically transcribed gene that has a role in late spermiogenesis; required for actin cone progression during spermatid individualization. This is Male-specific protein scotti from Drosophila willistoni (Fruit fly).